The sequence spans 406 residues: Dihydroorotase, mitochondrial (406 aa).

Residues 1–41 (MQTAATSTFFANPHVKHLPGPFLRPSPHYGALVHLPSFRNK) constitute a mitochondrion transit peptide. Zn(2+) is bound by residues histidine 69, histidine 71, lysine 155, histidine 193, histidine 231, and aspartate 305. An N6-carboxylysine modification is found at lysine 155.

The protein belongs to the metallo-dependent hydrolases superfamily. DHOase family. Class II DHOase subfamily. It depends on Zn(2+) as a cofactor.

The protein resides in the mitochondrion. It carries out the reaction (S)-dihydroorotate + H2O = N-carbamoyl-L-aspartate + H(+). The protein operates within pyrimidine metabolism; UMP biosynthesis via de novo pathway; (S)-dihydroorotate from bicarbonate: step 3/3. This is Dihydroorotase, mitochondrial (PYRC) from Oryza sativa subsp. japonica (Rice).